Here is a 227-residue protein sequence, read N- to C-terminus: MRIDIVTLFPEFFVSPLQCSLLARAIAGGVCNIAITNPRDFAADRYRTVDDTPYGGGAGMVLKPEPLFAAVESLPIIAPRAVILLTPQGRPLKQVFLRSLAADYAQLVLLCGHYEGVDERVRAHLATHEISLGDFVLTGGEIPALALIDGIVRLLPGTVGNRASLESESFEDNLLEYPQYTRPADFRGWQVPEVLLSGHHAQIAHWRREQQLTRTRERRPDLLPPEA.

S-adenosyl-L-methionine-binding positions include Gly112 and 132–137 (LGDFVL).

It belongs to the RNA methyltransferase TrmD family. Homodimer.

Its subcellular location is the cytoplasm. It carries out the reaction guanosine(37) in tRNA + S-adenosyl-L-methionine = N(1)-methylguanosine(37) in tRNA + S-adenosyl-L-homocysteine + H(+). Its function is as follows. Specifically methylates guanosine-37 in various tRNAs. This is tRNA (guanine-N(1)-)-methyltransferase from Gloeobacter violaceus (strain ATCC 29082 / PCC 7421).